A 1188-amino-acid polypeptide reads, in one-letter code: DNA-directed RNA polymerase subunit beta (1188 aa).

This sequence belongs to the RNA polymerase beta chain family. As to quaternary structure, the RNAP catalytic core consists of 2 alpha, 1 beta, 1 beta' and 1 omega subunit. When a sigma factor is associated with the core the holoenzyme is formed, which can initiate transcription.

It catalyses the reaction RNA(n) + a ribonucleoside 5'-triphosphate = RNA(n+1) + diphosphate. Functionally, DNA-dependent RNA polymerase catalyzes the transcription of DNA into RNA using the four ribonucleoside triphosphates as substrates. The protein is DNA-directed RNA polymerase subunit beta of Streptococcus sanguinis (strain SK36).